The chain runs to 308 residues: tRNA dimethylallyltransferase (308 aa).

ATP is bound at residue 16–23; the sequence is GPTASGKT. 18-23 provides a ligand contact to substrate; sequence TASGKT. The tract at residues 41–44 is interaction with substrate tRNA; the sequence is DSQQ.

This sequence belongs to the IPP transferase family. In terms of assembly, monomer. Requires Mg(2+) as cofactor.

The enzyme catalyses adenosine(37) in tRNA + dimethylallyl diphosphate = N(6)-dimethylallyladenosine(37) in tRNA + diphosphate. Catalyzes the transfer of a dimethylallyl group onto the adenine at position 37 in tRNAs that read codons beginning with uridine, leading to the formation of N6-(dimethylallyl)adenosine (i(6)A). In Myxococcus xanthus (strain DK1622), this protein is tRNA dimethylallyltransferase.